A 130-amino-acid polypeptide reads, in one-letter code: Small ribosomal subunit protein uS9 (130 aa).

This sequence belongs to the universal ribosomal protein uS9 family.

The polypeptide is Small ribosomal subunit protein uS9 (Neisseria gonorrhoeae (strain ATCC 700825 / FA 1090)).